Reading from the N-terminus, the 419-residue chain is GTPase Obg (419 aa).

One can recognise an Obg domain in the interval Met-1–Met-156. The region spanning Ala-157 to Ile-334 is the OBG-type G domain. Residues Gly-163–Ser-170, Phe-188–Val-192, Asp-209–Gly-212, Asn-278–Asp-281, and Asn-315–Ile-317 each bind GTP. Mg(2+) is bound by residues Ser-170 and Thr-190. In terms of domain architecture, OCT spans Ile-342 to Asn-419.

Belongs to the TRAFAC class OBG-HflX-like GTPase superfamily. OBG GTPase family. In terms of assembly, monomer. Mg(2+) serves as cofactor.

The protein localises to the cytoplasm. In terms of biological role, an essential GTPase which binds GTP, GDP and possibly (p)ppGpp with moderate affinity, with high nucleotide exchange rates and a fairly low GTP hydrolysis rate. Plays a role in control of the cell cycle, stress response, ribosome biogenesis and in those bacteria that undergo differentiation, in morphogenesis control. This chain is GTPase Obg, found in Mesomycoplasma hyopneumoniae (strain 7448) (Mycoplasma hyopneumoniae).